Here is a 341-residue protein sequence, read N- to C-terminus: Paired box protein Pax-9 (341 aa).

The segment at residues 4–130 (AFGEVNQLGG…SSISRILRNK (127 aa)) is a DNA-binding region (paired). The PAI subdomain stretch occupies residues 7 to 63 (EVNQLGGVFVNGRPLPNAIRLRIVELAQLGIRPCDISRQLRVSHGCVSKILARYNET). The interval 82 to 130 (TVVKHIRTYKQRDPGIFAWEIRDRLLADGVCDKYNVPSVSSISRILRNK) is RED subdomain. Residues 168–189 (AAAAKVPTPPGVPAIPGSVAMP) form an interaction with KDM5B region.

As to quaternary structure, interacts with KDM5B.

It localises to the nucleus. Transcription factor required for normal development of thymus, parathyroid glands, ultimobranchial bodies, teeth, skeletal elements of skull and larynx as well as distal limbs. The chain is Paired box protein Pax-9 (PAX9) from Macaca mulatta (Rhesus macaque).